Reading from the N-terminus, the 63-residue chain is MSKICEICGKGPSFGNNVSHANNKTSRIWYPNLQKIKAVKNGTVRSIKVCTRCIRSGHVTKAL.

It belongs to the bacterial ribosomal protein bL28 family.

This Geotalea uraniireducens (strain Rf4) (Geobacter uraniireducens) protein is Large ribosomal subunit protein bL28.